The following is a 1483-amino-acid chain: Ubiquitin fusion degradation protein 4 (1483 aa).

A disordered region spans residues 1-117 (MSENNSHNLD…NNEFGSNPLH (117 aa)). Residues 8–18 (NLDEHESHSEN) are compositionally biased toward basic and acidic residues. The span at 61-70 (EADDGEDDDN) shows a compositional bias: acidic residues. Phosphothreonine is present on threonine 87. Residue lysine 349 forms a Glycyl lysine isopeptide (Lys-Gly) (interchain with G-Cter in ubiquitin) linkage. The segment at 1007-1081 (CGVKSDSFIN…LIQLWKNKSK (75 aa)) is K-box. The 108-residue stretch at 1376 to 1483 (AEHGYTMDSS…EEGAGAFLLS (108 aa)) folds into the HECT domain. Cysteine 1450 (glycyl thioester intermediate) is an active-site residue.

Belongs to the UPL family. K-HECT subfamily.

The catalysed reaction is S-ubiquitinyl-[E2 ubiquitin-conjugating enzyme]-L-cysteine + [acceptor protein]-L-lysine = [E2 ubiquitin-conjugating enzyme]-L-cysteine + N(6)-ubiquitinyl-[acceptor protein]-L-lysine.. E3 ubiquitin-protein ligase which accepts ubiquitin from an E2 ubiquitin-conjugating enzyme in the form of a thioester and then directly transfers the ubiquitin to targeted substrates. The polypeptide is Ubiquitin fusion degradation protein 4 (UFD4) (Saccharomyces cerevisiae (strain ATCC 204508 / S288c) (Baker's yeast)).